The primary structure comprises 469 residues: Neuraminidase (469 aa).

The Intravirion segment spans residues 1 to 9; that stretch reads MNPNQKIIT. Residues 10 to 30 form a helical membrane-spanning segment; the sequence is IGSVSLTIATICFLMQIAILV. Residues 11 to 33 form an involved in apical transport and lipid raft association region; it reads GSVSLTIATICFLMQIAILVTTV. Over 31–469 the chain is Virion surface; sequence TTVTLHFKQY…DGADINLMPI (439 aa). Residues 36 to 88 form a hypervariable stalk region region; it reads HFKQYECSSPPNNQVMPCEPIIIERNITEIVYLTNTTIEKEICPKLVEYRNWS. N-linked (GlcNAc...) asparagine; by host glycans are attached at residues Asn-61, Asn-70, and Asn-86. The interval 91–469 is head of neuraminidase; the sequence is QCKITGFAPF…DGADINLMPI (379 aa). Cystine bridges form between Cys-92–Cys-417, Cys-124–Cys-129, Cys-183–Cys-230, Cys-232–Cys-237, Cys-278–Cys-291, Cys-280–Cys-289, Cys-318–Cys-337, and Cys-421–Cys-447. Arg-118 serves as a coordination point for substrate. N-linked (GlcNAc...) asparagine; by host glycosylation is present at Asn-146. Asp-151 (proton donor/acceptor) is an active-site residue. Arg-152 is a substrate binding site. N-linked (GlcNAc...) asparagine; by host glycans are attached at residues Asn-200 and Asn-234. 276–277 serves as a coordination point for substrate; that stretch reads EE. A substrate-binding site is contributed by Arg-292. Residues Asp-293, Gly-297, and Asp-324 each contribute to the Ca(2+) site. Arg-371 contacts substrate. The N-linked (GlcNAc...) asparagine; by host glycan is linked to Asn-402. Catalysis depends on Tyr-406, which acts as the Nucleophile.

Belongs to the glycosyl hydrolase 34 family. In terms of assembly, homotetramer. Ca(2+) is required as a cofactor. Post-translationally, N-glycosylated.

It is found in the virion membrane. It localises to the host apical cell membrane. It carries out the reaction Hydrolysis of alpha-(2-&gt;3)-, alpha-(2-&gt;6)-, alpha-(2-&gt;8)- glycosidic linkages of terminal sialic acid residues in oligosaccharides, glycoproteins, glycolipids, colominic acid and synthetic substrates.. With respect to regulation, inhibited by the neuraminidase inhibitors zanamivir (Relenza) and oseltamivir (Tamiflu). These drugs interfere with the release of progeny virus from infected cells and are effective against all influenza strains. Resistance to neuraminidase inhibitors is quite rare. Catalyzes the removal of terminal sialic acid residues from viral and cellular glycoconjugates. Cleaves off the terminal sialic acids on the glycosylated HA during virus budding to facilitate virus release. Additionally helps virus spread through the circulation by further removing sialic acids from the cell surface. These cleavages prevent self-aggregation and ensure the efficient spread of the progeny virus from cell to cell. Otherwise, infection would be limited to one round of replication. Described as a receptor-destroying enzyme because it cleaves a terminal sialic acid from the cellular receptors. May facilitate viral invasion of the upper airways by cleaving the sialic acid moieties on the mucin of the airway epithelial cells. Likely to plays a role in the budding process through its association with lipid rafts during intracellular transport. May additionally display a raft-association independent effect on budding. Plays a role in the determination of host range restriction on replication and virulence. Sialidase activity in late endosome/lysosome traffic seems to enhance virus replication. This is Neuraminidase from Influenza A virus (strain A/Memphis/4/1980 H3N2).